The chain runs to 425 residues: Protein CLP1 homolog (425 aa).

Residues Glu18, Lys59, and 121–126 (DVGKST) contribute to the ATP site.

It belongs to the Clp1 family. Clp1 subfamily.

It localises to the nucleus. Its function is as follows. Required for endonucleolytic cleavage during polyadenylation-dependent pre-mRNA 3'-end formation. This chain is Protein CLP1 homolog (cbc), found in Drosophila ananassae (Fruit fly).